Consider the following 208-residue polypeptide: Small ribosomal subunit protein uS2 (208 aa).

The protein belongs to the universal ribosomal protein uS2 family.

This Pyrobaculum calidifontis (strain DSM 21063 / JCM 11548 / VA1) protein is Small ribosomal subunit protein uS2.